Consider the following 319-residue polypeptide: Acetyl-coenzyme A carboxylase carboxyl transferase subunit alpha (319 aa).

One can recognise a CoA carboxyltransferase C-terminal domain in the interval 35 to 296 (NIDEEVQRLR…KTQLLADLED (262 aa)).

It belongs to the AccA family. As to quaternary structure, acetyl-CoA carboxylase is a heterohexamer composed of biotin carboxyl carrier protein (AccB), biotin carboxylase (AccC) and two subunits each of ACCase subunit alpha (AccA) and ACCase subunit beta (AccD).

Its subcellular location is the cytoplasm. The catalysed reaction is N(6)-carboxybiotinyl-L-lysyl-[protein] + acetyl-CoA = N(6)-biotinyl-L-lysyl-[protein] + malonyl-CoA. It functions in the pathway lipid metabolism; malonyl-CoA biosynthesis; malonyl-CoA from acetyl-CoA: step 1/1. Functionally, component of the acetyl coenzyme A carboxylase (ACC) complex. First, biotin carboxylase catalyzes the carboxylation of biotin on its carrier protein (BCCP) and then the CO(2) group is transferred by the carboxyltransferase to acetyl-CoA to form malonyl-CoA. In Edwardsiella ictaluri (strain 93-146), this protein is Acetyl-coenzyme A carboxylase carboxyl transferase subunit alpha.